A 128-amino-acid polypeptide reads, in one-letter code: Transcription antitermination protein NusB (128 aa).

It belongs to the NusB family.

In terms of biological role, involved in transcription antitermination. Required for transcription of ribosomal RNA (rRNA) genes. Binds specifically to the boxA antiterminator sequence of the ribosomal RNA (rrn) operons. This is Transcription antitermination protein NusB from Exiguobacterium sp. (strain ATCC BAA-1283 / AT1b).